Consider the following 376-residue polypeptide: Putative glutamate--cysteine ligase 2 (376 aa).

Belongs to the glutamate--cysteine ligase type 2 family. YbdK subfamily.

The catalysed reaction is L-cysteine + L-glutamate + ATP = gamma-L-glutamyl-L-cysteine + ADP + phosphate + H(+). Functionally, ATP-dependent carboxylate-amine ligase which exhibits weak glutamate--cysteine ligase activity. This is Putative glutamate--cysteine ligase 2 from Mycolicibacterium paratuberculosis (strain ATCC BAA-968 / K-10) (Mycobacterium paratuberculosis).